Reading from the N-terminus, the 600-residue chain is UvrABC system protein C (600 aa).

One can recognise a GIY-YIG domain in the interval 15–100; that stretch reads NSAGVYQYFN…IKQLHPKYNI (86 aa). The UVR domain maps to 203-238; it reads SILIKNLEKQMLVLAQNENYEEAAKVRDQIVTIKDL.

Belongs to the UvrC family. As to quaternary structure, interacts with UvrB in an incision complex.

It is found in the cytoplasm. Its function is as follows. The UvrABC repair system catalyzes the recognition and processing of DNA lesions. UvrC both incises the 5' and 3' sides of the lesion. The N-terminal half is responsible for the 3' incision and the C-terminal half is responsible for the 5' incision. The polypeptide is UvrABC system protein C (Campylobacter jejuni subsp. jejuni serotype O:6 (strain 81116 / NCTC 11828)).